Consider the following 293-residue polypeptide: Proline iminopeptidase (293 aa).

The 250-residue stretch at 28–277 (KPLVLLHGGP…FSRHMPFVEE (250 aa)) folds into the AB hydrolase-1 domain. S104 functions as the Nucleophile in the catalytic mechanism. Residue D244 is part of the active site. The Proton donor role is filled by H271.

This sequence belongs to the peptidase S33 family.

The enzyme catalyses Release of N-terminal proline from a peptide.. Releases the N-terminal proline from various substrates. This is Proline iminopeptidase from Clostridium botulinum (strain Hall / ATCC 3502 / NCTC 13319 / Type A).